The following is a 369-amino-acid chain: Glutamine synthetase 2 cytoplasmic (369 aa).

One can recognise a GS beta-grasp domain in the interval 32-112 (VQATYVWIDG…VMCDTYKFDG (81 aa)). Residues 119–369 (KRKTCLEVAN…AILRTICLDE (251 aa)) enclose the GS catalytic domain.

It belongs to the glutamine synthetase family. Homooctamer.

The protein localises to the cytoplasm. It catalyses the reaction L-glutamate + NH4(+) + ATP = L-glutamine + ADP + phosphate + H(+). The polypeptide is Glutamine synthetase 2 cytoplasmic (Gs2) (Drosophila melanogaster (Fruit fly)).